Reading from the N-terminus, the 186-residue chain is MKNNDSKISKYISLILRHKPEEIGLKLDEHGYLVVLDLIEGINKSYEGFSMDDLERIVREDSKGRYSFNEDKSKIRANQGHSIKVDLGLEEIKPPKVLYHGTGRKYLESILKNGLIKKERQYIHLSKDRETASIVGKRHGDLVILEVDSESMFNDGIKFYLSKNNVWLCNYVPKKYIKELNLEEVF.

Belongs to the KptA/TPT1 family.

In terms of biological role, removes the 2'-phosphate from RNA via an intermediate in which the phosphate is ADP-ribosylated by NAD followed by a presumed transesterification to release the RNA and generate ADP-ribose 1''-2''-cyclic phosphate (APPR&gt;P). May function as an ADP-ribosylase. This is Probable RNA 2'-phosphotransferase from Clostridium perfringens (strain SM101 / Type A).